Here is a 274-residue protein sequence, read N- to C-terminus: 2,3,4,5-tetrahydropyridine-2,6-dicarboxylate N-succinyltransferase (274 aa).

The substrate site is built by arginine 106 and aspartate 143.

Belongs to the transferase hexapeptide repeat family. As to quaternary structure, homotrimer.

The protein resides in the cytoplasm. It catalyses the reaction (S)-2,3,4,5-tetrahydrodipicolinate + succinyl-CoA + H2O = (S)-2-succinylamino-6-oxoheptanedioate + CoA. Its pathway is amino-acid biosynthesis; L-lysine biosynthesis via DAP pathway; LL-2,6-diaminopimelate from (S)-tetrahydrodipicolinate (succinylase route): step 1/3. The polypeptide is 2,3,4,5-tetrahydropyridine-2,6-dicarboxylate N-succinyltransferase (Rickettsia felis (strain ATCC VR-1525 / URRWXCal2) (Rickettsia azadi)).